Here is a 149-residue protein sequence, read N- to C-terminus: Alpha-crystallin A chain (149 aa).

The region spanning 41–149 (LFRSVLESGI…DPSHSERPIP (109 aa)) is the sHSP domain. Residues His89, Glu91, His96, and His143 each contribute to the Zn(2+) site.

It belongs to the small heat shock protein (HSP20) family. Heteropolymer composed of three CRYAA and one CRYAB subunits. Inter-subunit bridging via zinc ions enhances stability, which is crucial as there is no protein turn over in the lens. Can also form homodimers and homotetramers (dimers of dimers) which serve as the building blocks of homooligomers. Within homooligomers, the zinc-binding motif is created from residues of 3 different molecules. His-89 and Glu-91 from one molecule are ligands of the zinc ion, and His-96 and His-143 residues from additional molecules complete the site with tetrahedral coordination geometry.

It is found in the cytoplasm. The protein resides in the nucleus. Contributes to the transparency and refractive index of the lens. May act as a chaperone, preventing aggregation of various proteins under a wide range of stress conditions. The chain is Alpha-crystallin A chain (CRYAA) from Eudromia elegans (Elegant crested-tinamou).